The primary structure comprises 382 residues: Mating-type protein a-1 (382 aa).

Residues 116 to 184 (IPRPPNAYIL…RLLLENPDYR (69 aa)) constitute a DNA-binding region (HMG box).

As to quaternary structure, binds in vitro to DNA containing a specific core sequence 5'-CTTTG-3'.

Its subcellular location is the nucleus. In terms of biological role, mating type proteins are sequence specific DNA-binding proteins that act as master switches in yeast differentiation by controlling gene expression in a cell type-specific fashion. Transcriptional activator that induces the transcription of a-specific genes like mating factor mfa-1. Required for mating as an a-cell, blocking of heterokaryon formation (vegetative incompatibility) and for perithecium induction. This Neurospora crassa protein is Mating-type protein a-1 (mta-1).